Consider the following 316-residue polypeptide: Dehydrogenase/reductase SDR family protein 7-like (316 aa).

Residues 1–18 lie on the Cytoplasmic side of the membrane; the sequence is MFFYKIIYFIGFPYIVLR. A helical; Signal-anchor for type II membrane protein membrane pass occupies residues 19–39; that stretch reads LIVSIILPIASLYFIYCNFIA. Over 40-316 the chain is Peroxisomal; sequence PKLREKPESS…HKFASSSVKK (277 aa). Residue 56–80 participates in NAD(+) binding; that stretch reads IITGASSGIGAELAKKYARLGCKVT. Position 194 (serine 194) interacts with substrate. The active-site Proton acceptor is tyrosine 207.

Belongs to the short-chain dehydrogenases/reductases (SDR) family.

It is found in the peroxisome membrane. Putative oxidoreductase. This is Dehydrogenase/reductase SDR family protein 7-like from Dictyostelium discoideum (Social amoeba).